The following is a 375-amino-acid chain: Trichodiene synthase (375 aa).

This sequence belongs to the trichodiene synthase family.

It catalyses the reaction (2E,6E)-farnesyl diphosphate = trichodiene + diphosphate. It participates in sesquiterpene biosynthesis; trichothecene biosynthesis. TS is a member of the terpene cyclase group of enzymes. It catalyzes the isomerization and cyclization of farnesyl pyro-phosphate to form trichodiene, the first cyclic intermediate in the biosynthetic pathway for trichothecenes. It serves to branch trichothecene biosynthesis from the isoprenoid pathway. This Fusarium boothii protein is Trichodiene synthase (TRI5).